A 420-amino-acid chain; its full sequence is Exodeoxyribonuclease 7 large subunit (420 aa).

This sequence belongs to the XseA family. As to quaternary structure, heterooligomer composed of large and small subunits.

It localises to the cytoplasm. The catalysed reaction is Exonucleolytic cleavage in either 5'- to 3'- or 3'- to 5'-direction to yield nucleoside 5'-phosphates.. In terms of biological role, bidirectionally degrades single-stranded DNA into large acid-insoluble oligonucleotides, which are then degraded further into small acid-soluble oligonucleotides. The sequence is that of Exodeoxyribonuclease 7 large subunit from Helicobacter acinonychis (strain Sheeba).